We begin with the raw amino-acid sequence, 695 residues long: Biosynthetic arginine decarboxylase 1 (695 aa).

Lys141 carries the N6-(pyridoxal phosphate)lysine modification. 332–342 (LDVGGGLGVDY) is a substrate binding site.

Belongs to the Orn/Lys/Arg decarboxylase class-II family. SpeA subfamily. Requires Mg(2+) as cofactor. Pyridoxal 5'-phosphate serves as cofactor.

The catalysed reaction is L-arginine + H(+) = agmatine + CO2. Functionally, catalyzes the biosynthesis of agmatine from arginine. In Synechocystis sp. (strain ATCC 27184 / PCC 6803 / Kazusa), this protein is Biosynthetic arginine decarboxylase 1 (speA1).